A 1003-amino-acid chain; its full sequence is DNA topoisomerase 3-alpha (1003 aa).

A Toprim domain is found at Lys-35–Ser-179. The region spanning Asp-197–Phe-617 is the Topo IA-type catalytic domain. The active-site O-(5'-phospho-DNA)-tyrosine intermediate is Tyr-362. Residues Gly-400 to Leu-426 form a disordered region. The C4-type zinc-finger motif lies at Cys-658–Cys-685. Cys-815, Cys-817, Cys-840, and Cys-845 together coordinate Zn(2+). The GRF-type 1 zinc-finger motif lies at Cys-815–Ser-854. Residues Ser-856–Ser-888 are disordered. Residues Pro-862–Ser-888 show a composition bias toward low complexity. Zn(2+)-binding residues include Cys-899, Cys-901, Cys-924, and Cys-932. A GRF-type 2 zinc finger spans residues Cys-899–Asn-941. Positions Ser-946–Gln-991 are disordered.

Belongs to the type IA topoisomerase family. In terms of assembly, binds ssDNA. Interacts (via N-terminal region) with BLM; the interaction is direct. Directly interacts with RMI1. Component of the RMI complex, containing at least TOP3A, RMI1 and RMI2. The RMI complex interacts with BLM. Requires Mg(2+) as cofactor. As to expression, highly expressed in testis.

The protein localises to the mitochondrion matrix. The enzyme catalyses ATP-independent breakage of single-stranded DNA, followed by passage and rejoining.. Its function is as follows. Releases the supercoiling and torsional tension of DNA introduced during the DNA replication and transcription by transiently cleaving and rejoining one strand of the DNA duplex. Introduces a single-strand break via transesterification at a target site in duplex DNA. The scissile phosphodiester is attacked by the catalytic tyrosine of the enzyme, resulting in the formation of a DNA-(5'-phosphotyrosyl)-enzyme intermediate and the expulsion of a 3'-OH DNA strand. The free DNA strand then undergoes passage around the unbroken strand thus removing DNA supercoils. Finally, in the religation step, the DNA 3'-OH attacks the covalent intermediate to expel the active-site tyrosine and restore the DNA phosphodiester backbone. As an essential component of the RMI complex it is involved in chromosome separation and the processing of homologous recombination intermediates to limit DNA crossover formation in cells. Has DNA decatenation activity. It is required for mtDNA decatenation and segregation after completion of replication, in a process that does not require BLM, RMI1 and RMI2. This Mus musculus (Mouse) protein is DNA topoisomerase 3-alpha (Top3a).